Here is a 315-residue protein sequence, read N- to C-terminus: Methionyl-tRNA formyltransferase (315 aa).

(6S)-5,6,7,8-tetrahydrofolate is bound at residue 111–114; sequence SLLP.

It belongs to the Fmt family.

The enzyme catalyses L-methionyl-tRNA(fMet) + (6R)-10-formyltetrahydrofolate = N-formyl-L-methionyl-tRNA(fMet) + (6S)-5,6,7,8-tetrahydrofolate + H(+). Functionally, attaches a formyl group to the free amino group of methionyl-tRNA(fMet). The formyl group appears to play a dual role in the initiator identity of N-formylmethionyl-tRNA by promoting its recognition by IF2 and preventing the misappropriation of this tRNA by the elongation apparatus. This Chlorobium phaeobacteroides (strain DSM 266 / SMG 266 / 2430) protein is Methionyl-tRNA formyltransferase.